The sequence spans 1038 residues: Probable LRR receptor-like serine/threonine-protein kinase At1g53430 (1038 aa).

Positions 1 to 28 (MGFIFSTEKVVYVLLLIFVCLENFGSNA) are cleaved as a signal peptide. The Extracellular portion of the chain corresponds to 29 to 609 (QLLPEDEVQT…VDTGKPLSNG (581 aa)). N48, N77, N85, N112, and N127 each carry an N-linked (GlcNAc...) asparagine glycan. LRR repeat units lie at residues 113–137 (LTRLREIDLSRNFLNGTIPTTLSQI), 139–160 (LEILSVIGNRLSGPFPPQLGDI), 161–184 (TTLTDVNLETNLFTGPLPRNLGNL), 185–208 (RSLKELLLSANNFTGQIPESLSNL), 210–234 (NLTEFRIDGNSLSGKIPDFIGNWTL), and 236–256 (ERLDLQGTSMEGPIPPSISNL). N196, N210, N231, N255, and N258 each carry an N-linked (GlcNAc...) asparagine glycan. 5 LRR repeats span residues 259-281 (LTELRITDLRGQAAFSFPDLRNL), 282-305 (MKMKRLVLRNCLIRGPIPEYIGSM), 306-328 (SELKTLDLSSNMLTGVIPDTFRN), 330-351 (DAFNFMFLNNNSLTGPVPQFII), and 352-374 (NSKENLDLSDNNFTQPPTLSCNQ). N-linked (GlcNAc...) asparagine glycosylation is found at N339, N363, N471, and N561. A helical transmembrane segment spans residues 610 to 630 (AVAGIVIAACAVFGLLVLVIL). The Cytoplasmic segment spans residues 631-1038 (RLTGYLGGKE…LDDLTDVKIE (408 aa)). Phosphothreonine is present on T658. The Protein kinase domain maps to 669-950 (FDPENKIGEG…EGKIKVQPPL (282 aa)). ATP is bound by residues 675–683 (IGEGGFGPV) and K697. Y742 bears the Phosphotyrosine mark. The active-site Proton acceptor is D795. S828 is modified (phosphoserine). A phosphothreonine mark is found at T829 and T834. Y842 carries the post-translational modification Phosphotyrosine. The tract at residues 984–1038 (RNREQDISSSSMDGPWVDSSFSEPGKDVSLQQQEEGRSSSSSRKLLDDLTDVKIE) is disordered. Positions 1027 to 1038 (KLLDDLTDVKIE) are enriched in basic and acidic residues.

This sequence belongs to the protein kinase superfamily. Ser/Thr protein kinase family.

It localises to the membrane. It catalyses the reaction L-seryl-[protein] + ATP = O-phospho-L-seryl-[protein] + ADP + H(+). The catalysed reaction is L-threonyl-[protein] + ATP = O-phospho-L-threonyl-[protein] + ADP + H(+). The chain is Probable LRR receptor-like serine/threonine-protein kinase At1g53430 from Arabidopsis thaliana (Mouse-ear cress).